A 229-amino-acid chain; its full sequence is Acetylornithine aminotransferase (229 aa).

Residues 95–96 and Phe122 contribute to the pyridoxal 5'-phosphate site; that span reads GA. Arg125 contacts N(2)-acetyl-L-ornithine. 208–211 is a binding site for pyridoxal 5'-phosphate; that stretch reads DEIQ.

Belongs to the class-III pyridoxal-phosphate-dependent aminotransferase family. ArgD subfamily. Homodimer. The cofactor is pyridoxal 5'-phosphate.

It localises to the cytoplasm. It catalyses the reaction N(2)-acetyl-L-ornithine + 2-oxoglutarate = N-acetyl-L-glutamate 5-semialdehyde + L-glutamate. It participates in amino-acid biosynthesis; L-arginine biosynthesis; N(2)-acetyl-L-ornithine from L-glutamate: step 4/4. This is Acetylornithine aminotransferase (argD) from Bacillus amyloliquefaciens (Bacillus velezensis).